Reading from the N-terminus, the 153-residue chain is Large ribosomal subunit protein bL9 (153 aa).

It belongs to the bacterial ribosomal protein bL9 family.

Its function is as follows. Binds to the 23S rRNA. The polypeptide is Large ribosomal subunit protein bL9 (Mycoplasma mycoides subsp. mycoides SC (strain CCUG 32753 / NCTC 10114 / PG1)).